A 431-amino-acid chain; its full sequence is 3-deoxy-D-manno-octulosonic acid transferase (431 aa).

Residues 5–27 (WLTSRLYDAFLVCAFFVSAPRIF) traverse the membrane as a helical; Signal-anchor segment. Catalysis depends on Glu-67, which acts as the Proton acceptor. CMP-binding positions include 275–276 (PR), 315–317 (MGV), and 342–345 (NLLE).

It belongs to the glycosyltransferase group 1 family. Glycosyltransferase 30 subfamily.

The protein resides in the cell inner membrane. It catalyses the reaction lipid IVA (E. coli) + CMP-3-deoxy-beta-D-manno-octulosonate = alpha-Kdo-(2-&gt;6)-lipid IVA (E. coli) + CMP + H(+). The catalysed reaction is alpha-Kdo-(2-&gt;6)-lipid IVA (E. coli) + CMP-3-deoxy-beta-D-manno-octulosonate = alpha-Kdo-(2-&gt;4)-alpha-Kdo-(2-&gt;6)-lipid IVA (E. coli) + CMP + H(+). The enzyme catalyses alpha-Kdo-(2-&gt;4)-alpha-Kdo-(2-&gt;6)-lipid IVA (E. coli) + CMP-3-deoxy-beta-D-manno-octulosonate = alpha-Kdo-(2-&gt;8)-alpha-Kdo-(2-&gt;4)-alpha-Kdo-(2-&gt;6)-lipid IVA (E. coli) + CMP + H(+). It participates in bacterial outer membrane biogenesis; LPS core biosynthesis. In terms of biological role, involved in lipopolysaccharide (LPS) biosynthesis. Catalyzes the transfer of three 3-deoxy-D-manno-octulosonate (Kdo) residues from CMP-Kdo to lipid IV(A), the tetraacyldisaccharide-1,4'-bisphosphate precursor of lipid A. Thus generates the genus-specific LPS epitope of Chlamydia, composed of the trisaccharide alpha-Kdo-(2-&gt;8)-alpha-Kdo-(2-&gt;4)-alpha-Kdo. The polypeptide is 3-deoxy-D-manno-octulosonic acid transferase (waaA) (Chlamydia trachomatis serovar A (strain ATCC VR-571B / DSM 19440 / HAR-13)).